Reading from the N-terminus, the 156-residue chain is 16 kDa phloem protein 1 (156 aa).

Positions M1–A108 constitute a C2 domain. Ca(2+) is bound by residues D20, D26, D78, D80, S83, and D86.

The cofactor is Ca(2+).

Functionally, binds to both sense and antisense RNA. Can also bind sheared DNA and dodecamer DNA with a low affinity. Interacts with mesophyll plasmodesmata to mediate its own cell-to-cell transport and potentiate RNA trafficking. May play a role in plant defense signaling. The protein is 16 kDa phloem protein 1 of Arabidopsis thaliana (Mouse-ear cress).